A 351-amino-acid chain; its full sequence is Adenine deaminase (351 aa).

Residues His20, His22, and His200 each contribute to the Zn(2+) site. Glu203 acts as the Proton donor in catalysis. Position 281 (Asp281) interacts with Zn(2+). Asp282 is a substrate binding site.

It belongs to the metallo-dependent hydrolases superfamily. Adenosine and AMP deaminases family. Adenine deaminase type 2 subfamily. The cofactor is Zn(2+).

The catalysed reaction is adenine + H2O + H(+) = hypoxanthine + NH4(+). Its function is as follows. Catalyzes the hydrolytic deamination of adenine to hypoxanthine. Plays an important role in the purine salvage pathway and in nitrogen catabolism. This Cupriavidus necator (strain ATCC 17699 / DSM 428 / KCTC 22496 / NCIMB 10442 / H16 / Stanier 337) (Ralstonia eutropha) protein is Adenine deaminase.